The sequence spans 315 residues: NAD(P)H-dependent anabolic L-arginine dehydrogenase DauB (315 aa).

It belongs to the ornithine cyclodeaminase/mu-crystallin family.

It carries out the reaction L-arginine + NAD(+) + H2O = 5-guanidino-2-oxopentanoate + NH4(+) + NADH + H(+). The enzyme catalyses L-arginine + NADP(+) + H2O = 5-guanidino-2-oxopentanoate + NH4(+) + NADPH + H(+). Involved in the anabolism of D-lysine and D-arginine. Under aerobic conditions, the arginine succinyltransferase (AST) and arginine transaminase (ATA) pathways are 2 major routes for L-arginine utilization as the sole source of carbon and nitrogen. The D-to-L racemization of arginine by DauA and DauB is necessary, before to be channeled into the AST and/or ATA pathways. DauB catalyzes the synthesis of L-arginine from 2-ketoarginine (2-KA) and ammonium. This Pseudomonas aeruginosa (strain ATCC 15692 / DSM 22644 / CIP 104116 / JCM 14847 / LMG 12228 / 1C / PRS 101 / PAO1) protein is NAD(P)H-dependent anabolic L-arginine dehydrogenase DauB.